Here is a 149-residue protein sequence, read N- to C-terminus: UPF0179 protein rrnAC1064 (149 aa).

It belongs to the UPF0179 family.

The sequence is that of UPF0179 protein rrnAC1064 from Haloarcula marismortui (strain ATCC 43049 / DSM 3752 / JCM 8966 / VKM B-1809) (Halobacterium marismortui).